The sequence spans 501 residues: DELTA-alicitoxin-Pse2a (501 aa).

Residues 1–22 (MSPYFKLSSALIFLAITMEALC) form the signal peptide. The propeptide occupies 23–35 (SPIENTSTSNKDN). In terms of domain architecture, MACPF spans 23–359 (SPIENTSTSN…GFLHFGCSYL (337 aa)). Residues 135–159 (AAVTNNIASSEEEVQGLSLNLKAYS) are a coiled coil. The 35-residue stretch at 388–422 (VCKVGPEGCQHHEDCHYRAAFWCECGGPYDLARTC) folds into the EGF-like domain. 3 disulfide bridges follow: cysteine 389/cysteine 402, cysteine 396/cysteine 410, and cysteine 412/cysteine 422.

The protein resides in the secreted. It is found in the nematocyst. In terms of biological role, causes lethal toxicity to the shrimp Palaemon paucidence, and hemolytic activity toward sheep red blood cells. The polypeptide is DELTA-alicitoxin-Pse2a (Phyllodiscus semoni (Night anemone)).